A 524-amino-acid chain; its full sequence is mRNA cap guanine-N(7) methyltransferase (524 aa).

Residues 1–155 are disordered; that stretch reads MSDKEAGVAS…DKKRAHDEAE (155 aa). The span at 19 to 40 shows a compositional bias: basic and acidic residues; sequence NKDEVDVKNTEEHSKQESKSDI. Positions 68-77 are enriched in polar residues; sequence NNKVISSVYN. The span at 90-99 shows a compositional bias: basic and acidic residues; the sequence is KTTDKYDKYG. The span at 100-112 shows a compositional bias: polar residues; it reads SRSTPIATPTAPV. Positions 214–522 constitute an mRNA cap 0 methyltransferase domain; the sequence is SPIYKLRNFN…FYIGFVFEKL (309 aa). Position 223–224 (223–224) interacts with mRNA; that stretch reads NN. S-adenosyl-L-methionine is bound by residues K227, C251, D273, D319, Q349, and Y354.

This sequence belongs to the class I-like SAM-binding methyltransferase superfamily. mRNA cap 0 methyltransferase family.

Its subcellular location is the nucleus. It catalyses the reaction a 5'-end (5'-triphosphoguanosine)-ribonucleoside in mRNA + S-adenosyl-L-methionine = a 5'-end (N(7)-methyl 5'-triphosphoguanosine)-ribonucleoside in mRNA + S-adenosyl-L-homocysteine. Functionally, responsible for methylating the 5'-cap structure of mRNAs. The chain is mRNA cap guanine-N(7) methyltransferase (ABD1) from Debaryomyces hansenii (strain ATCC 36239 / CBS 767 / BCRC 21394 / JCM 1990 / NBRC 0083 / IGC 2968) (Yeast).